Here is a 358-residue protein sequence, read N- to C-terminus: tRNA N6-adenosine threonylcarbamoyltransferase (358 aa).

Residues H111 and H115 each coordinate Fe cation. Residues 146–150, D179, G192, and N294 each bind substrate; that span reads LVSGG. D322 lines the Fe cation pocket.

It belongs to the KAE1 / TsaD family. Requires Fe(2+) as cofactor.

It localises to the cytoplasm. The enzyme catalyses L-threonylcarbamoyladenylate + adenosine(37) in tRNA = N(6)-L-threonylcarbamoyladenosine(37) in tRNA + AMP + H(+). Required for the formation of a threonylcarbamoyl group on adenosine at position 37 (t(6)A37) in tRNAs that read codons beginning with adenine. Is involved in the transfer of the threonylcarbamoyl moiety of threonylcarbamoyl-AMP (TC-AMP) to the N6 group of A37, together with TsaE and TsaB. TsaD likely plays a direct catalytic role in this reaction. This is tRNA N6-adenosine threonylcarbamoyltransferase from Helicobacter hepaticus (strain ATCC 51449 / 3B1).